An 80-amino-acid polypeptide reads, in one-letter code: Acyl carrier protein (80 aa).

One can recognise a Carrier domain in the interval 4–79; it reads QEIFEKVKAV…DAVEYIKAKL (76 aa). Serine 39 is modified (O-(pantetheine 4'-phosphoryl)serine).

Belongs to the acyl carrier protein (ACP) family. 4'-phosphopantetheine is transferred from CoA to a specific serine of apo-ACP by AcpS. This modification is essential for activity because fatty acids are bound in thioester linkage to the sulfhydryl of the prosthetic group.

It is found in the cytoplasm. The protein operates within lipid metabolism; fatty acid biosynthesis. Carrier of the growing fatty acid chain in fatty acid biosynthesis. The polypeptide is Acyl carrier protein (Thermus thermophilus (strain ATCC BAA-163 / DSM 7039 / HB27)).